Here is a 435-residue protein sequence, read N- to C-terminus: tRNA(Ile)-lysidine synthase (435 aa).

Position 25–30 (25–30 (SGGLDS)) interacts with ATP.

It belongs to the tRNA(Ile)-lysidine synthase family.

Its subcellular location is the cytoplasm. The enzyme catalyses cytidine(34) in tRNA(Ile2) + L-lysine + ATP = lysidine(34) in tRNA(Ile2) + AMP + diphosphate + H(+). Ligates lysine onto the cytidine present at position 34 of the AUA codon-specific tRNA(Ile) that contains the anticodon CAU, in an ATP-dependent manner. Cytidine is converted to lysidine, thus changing the amino acid specificity of the tRNA from methionine to isoleucine. The polypeptide is tRNA(Ile)-lysidine synthase (Photobacterium profundum (strain SS9)).